The chain runs to 261 residues: Oxidoreductase ptaF (261 aa).

Belongs to the avfA family.

It functions in the pathway secondary metabolite biosynthesis. Its function is as follows. Oxidoreductase; part of the gene cluster that mediates the biosynthesis of pestheic acid, a diphenyl ether which is a biosynthetic precursor of the unique chloropupukeananes. The biosynthesis initiates from condensation of acetate and malonate units catalyzed by the non-reducing PKS ptaA. As the ptaA protein is TE/CLC domain-deficient, hydrolysis and Claisen cyclization of the polyketide could be catalyzed by ptaB containing a beta-lactamase domain. The ptaB protein might hydrolyze the thioester bond between the ACP of ptaA and the intermediate to release atrochrysone carboxylic acid, which is spontaneously dehydrated to form endocrocin anthrone. Endocrocin anthrone is then converted to endocrocin, catalyzed by the anthrone oxygenase ptaC. Spontaneous decarboxylation of endocrocin occurs to generate emodin. An O-methyltransferase (ptaH or ptaI) could methylate emodin to form physcion. PtaJ could then catalyze the oxidative cleavage of physcion, and rotation of the intermediate could then afford desmethylisosulochrin. PtaF, a putative NADH-dependent oxidoreductase, might also participate in the oxidative cleavage step. Desmethylisosulochrin is then transformed by another O-methyltransferase (ptaH or ptaI) to form isosulochrin. Chlorination of isosulochrin by ptaM in the cyclohexadienone B ring then produces chloroisosulochrin. PtaE is responsible for the oxidative coupling reactions of both benzophenones isosulouchrin and chloroisosulochrin to RES-1214-1 and pestheic acid respectively, regardless of chlorination. The polypeptide is Oxidoreductase ptaF (Pestalotiopsis fici (strain W106-1 / CGMCC3.15140)).